A 120-amino-acid polypeptide reads, in one-letter code: SPbeta prophage-derived uncharacterized protein YosG (120 aa).

This chain is SPbeta prophage-derived uncharacterized protein YosG (yosG), found in Bacillus subtilis (strain 168).